The following is a 51-amino-acid chain: Ovomucoid (51 aa).

Residues 3-51 (IDCSGYPKPACTLEFFPLCGSDNQTYSNKCAFCNAAVEKNVTLNHIGEC) form the Kazal-like domain. Intrachain disulfides connect Cys-5/Cys-35, Cys-13/Cys-32, and Cys-21/Cys-51. The N-linked (GlcNAc...) asparagine glycan is linked to Asn-42.

It localises to the secreted. This Eudromia elegans (Elegant crested-tinamou) protein is Ovomucoid.